The sequence spans 1116 residues: Auxin response factor 21 (1116 aa).

A DNA-binding region (TF-B3) is located at residues 132–234 (FCKTLTASDT…QLLLGIRRAN (103 aa)). The tract at residues 763-812 (KTDDVPSTSTSPSTNSNPVLLQSIPSSSKNQSLTTAGKTSQSSVVLGPTI) is disordered. Over residues 768 to 780 (PSTSTSPSTNSNP) the composition is skewed to low complexity. The span at 781 to 806 (VLLQSIPSSSKNQSLTTAGKTSQSSV) shows a compositional bias: polar residues. The PB1 domain occupies 998 to 1082 (RTYTKVHKRG…RCIRILSPQE (85 aa)).

Belongs to the ARF family. Homodimers and heterodimers. As to expression, expressed in roots, culms, leaves and young panicles.

It is found in the nucleus. Auxin response factors (ARFs) are transcriptional factors that bind specifically to the DNA sequence 5'-TGTCTC-3' found in the auxin-responsive promoter elements (AuxREs). This Oryza sativa subsp. japonica (Rice) protein is Auxin response factor 21 (ARF21).